The sequence spans 144 residues: Superoxide dismutase [Mn], mitochondrial (144 aa).

Mn(2+) contacts are provided by His10, His58, and Asp143.

This sequence belongs to the iron/manganese superoxide dismutase family. In terms of assembly, homotetramer. It depends on Mn(2+) as a cofactor.

It localises to the mitochondrion matrix. It carries out the reaction 2 superoxide + 2 H(+) = H2O2 + O2. Its function is as follows. Destroys superoxide anion radicals which are normally produced within the cells and which are toxic to biological systems. In Apostichopus californicus (California sea cucumber), this protein is Superoxide dismutase [Mn], mitochondrial.